The sequence spans 249 residues: Putative TrmH family tRNA/rRNA methyltransferase (249 aa).

Residues glycine 196, isoleucine 216, and leucine 225 each coordinate S-adenosyl-L-methionine.

This sequence belongs to the class IV-like SAM-binding methyltransferase superfamily. RNA methyltransferase TrmH family.

The sequence is that of Putative TrmH family tRNA/rRNA methyltransferase from Staphylococcus epidermidis (strain ATCC 35984 / DSM 28319 / BCRC 17069 / CCUG 31568 / BM 3577 / RP62A).